The sequence spans 700 residues: Calpain-2 catalytic subunit (700 aa).

Ala2 carries the post-translational modification N-acetylalanine. The propeptide at Ala2–Gly19 is anchors to the small subunit. Residues Leu45–Thr344 form the Calpain catalytic domain. Ca(2+)-binding residues include Ile89, Gly91, and Asp96. Residue Cys105 is part of the active site. Glu175, Gln229, and Lys230 together coordinate Ca(2+). Active-site residues include His262 and Asn286. The Ca(2+) site is built by Glu292, Asp299, and Glu323. The domain III stretch occupies residues Pro345–Asp514. The tract at residues Glu515 to Asp529 is linker. A domain IV region spans residues Ile530–Leu700. The Ca(2+) site is built by Ala542, Asp545, Glu547, Glu552, Asp585, Asp587, Ser589, Lys591, Glu596, Asp615, Asp617, Ser619, Thr621, Glu626, Asp658, and Asn661. 2 consecutive EF-hand domains span residues Phe572–Gln605 and Thr602–Lys637. The EF-hand 3 domain maps to Val667–Leu700.

Belongs to the peptidase C2 family. As to quaternary structure, forms a heterodimer with a small (regulatory) subunit (CAPNS1). Interacts with CPEB3; this leads to cleavage of CPEB3. Interacts with PIDD1 alternative open reading frame protein altPIDD1. It depends on Ca(2+) as a cofactor. As to expression, ubiquitous.

Its subcellular location is the cytoplasm. It is found in the cell membrane. The enzyme catalyses Broad endopeptidase specificity.. Activated by 200-1000 micromolar concentrations of calcium and inhibited by calpastatin. Functionally, calcium-regulated non-lysosomal thiol-protease which catalyzes limited proteolysis of substrates involved in cytoskeletal remodeling and signal transduction. Proteolytically cleaves MYOC at 'Arg-226'. Proteolytically cleaves CPEB3 following neuronal stimulation which abolishes CPEB3 translational repressor activity, leading to translation of CPEB3 target mRNAs. The sequence is that of Calpain-2 catalytic subunit (CAPN2) from Homo sapiens (Human).